We begin with the raw amino-acid sequence, 400 residues long: Elongation factor Tu (400 aa).

Positions 10-209 (KEHVNIGTIG…QVDNWIDAPL (200 aa)) constitute a tr-type G domain. Residues 19–26 (GHVDHGKT) form a G1 region. Residue 19-26 (GHVDHGKT) participates in GTP binding. Thr26 contacts Mg(2+). A G2 region spans residues 61–65 (GITIN). Residues 82-85 (DCPG) form a G3 region. Residues 82-86 (DCPGH) and 137-140 (NKVD) contribute to the GTP site. A G4 region spans residues 137–140 (NKVD). Residues 179-181 (SAL) form a G5 region.

This sequence belongs to the TRAFAC class translation factor GTPase superfamily. Classic translation factor GTPase family. EF-Tu/EF-1A subfamily. As to quaternary structure, monomer.

The protein resides in the cytoplasm. It catalyses the reaction GTP + H2O = GDP + phosphate + H(+). Functionally, GTP hydrolase that promotes the GTP-dependent binding of aminoacyl-tRNA to the A-site of ribosomes during protein biosynthesis. In Mycoplasma mobile (strain ATCC 43663 / 163K / NCTC 11711) (Mesomycoplasma mobile), this protein is Elongation factor Tu.